The sequence spans 193 residues: Bcl-2-binding component 3, isoforms 1/2 (193 aa).

Disordered regions lie at residues 1–28 (MARA…FPLG) and 71–138 (ALGG…REIG). A Phosphoserine modification is found at serine 10. Over residues 71–82 (ALGGSRWPGGPR) the composition is skewed to low complexity. The BH3 signature appears at 137 to 151 (IGAQLRRMADDLNAQ).

It belongs to the Bcl-2 family. In terms of assembly, interacts with MCL1 and BCL2A1. Interacts (via BH3 domain) with BCL2. Interacts with BCL2L1/BCL-XL. Interacts (via BH3 domain) with NOL3/ARC (via CARD domain); this interaction prevents BBC3 association with BCL2 and results in CASP8 activation. Ubiquitously expressed.

It is found in the mitochondrion. In terms of biological role, essential mediator of p53/TP53-dependent and p53/TP53-independent apoptosis. Promotes partial unfolding of BCL2L1 and dissociation of BCL2L1 from p53/TP53, releasing the bound p53/TP53 to induce apoptosis. Regulates ER stress-induced neuronal apoptosis. In Homo sapiens (Human), this protein is Bcl-2-binding component 3, isoforms 1/2 (BBC3).